We begin with the raw amino-acid sequence, 99 residues long: Nucleoid-associated protein SPy_1862/M5005_Spy1580 (99 aa).

This sequence belongs to the YbaB/EbfC family. Homodimer.

It is found in the cytoplasm. Its subcellular location is the nucleoid. Functionally, binds to DNA and alters its conformation. May be involved in regulation of gene expression, nucleoid organization and DNA protection. This chain is Nucleoid-associated protein SPy_1862/M5005_Spy1580, found in Streptococcus pyogenes serotype M1.